Reading from the N-terminus, the 188-residue chain is GTP cyclohydrolase 1 (188 aa).

Residues Cys78, His81, and Cys150 each contribute to the Zn(2+) site.

Belongs to the GTP cyclohydrolase I family. In terms of assembly, toroid-shaped homodecamer, composed of two pentamers of five dimers.

The enzyme catalyses GTP + H2O = 7,8-dihydroneopterin 3'-triphosphate + formate + H(+). Its pathway is cofactor biosynthesis; 7,8-dihydroneopterin triphosphate biosynthesis; 7,8-dihydroneopterin triphosphate from GTP: step 1/1. The sequence is that of GTP cyclohydrolase 1 from Geobacillus kaustophilus (strain HTA426).